A 461-amino-acid polypeptide reads, in one-letter code: MQKNEIKQSDMKPLIIDSSWTERFLPDPPREKDNRPPFRRDRGRILHSAAFRCLQAKTQIHAIGENDFYRTRLTHSLEVAQIGSSLVAQLKFLETFESLSQTLNIDKNELQKQLKPLLPSNDLIESLCFAHDIGHPPFGHGGETALNYMMAEQGGFEGNAQTFRILTKLEPYTENAGMNLTRRTLLGVVKYPALLDVASPQYAELNFSRNIDPRFVRIHDWIPGKGIFRDDLKMFNWLLENLSENDRTLFGKFKKVRENPAESLHTRFKSLDCSIMELADDIAYGVHDLEDAIVTGVVNPHQWQAAHSALKQIPSAWLQENIDSISQRLFSDKHFERKQAIGALVNFFITNVRWKLTANFDEPLLRYNAELSPEVIVALGVFKKFVWDYVIRNVDTQRIEYKGQRMLTEMFQIFESDPERLLPRNTANRWRNAPEERKKRIICDYIAGMSDAHALRVYQQL.

Residues 22–41 form a disordered region; that stretch reads ERFLPDPPREKDNRPPFRRD. A compositionally biased stretch (basic and acidic residues) spans 24–41; sequence FLPDPPREKDNRPPFRRD. In terms of domain architecture, HD spans 72–285; the sequence is RLTHSLEVAQ…MELADDIAYG (214 aa).

It belongs to the dGTPase family. Type 2 subfamily.

In Haemophilus influenzae (strain PittEE), this protein is Deoxyguanosinetriphosphate triphosphohydrolase-like protein.